A 63-amino-acid polypeptide reads, in one-letter code: Jingdongin-1 (63 aa).

The first 22 residues, 1–22 (MLTLKKSMLLLFFLGTINLSLC), serve as a signal peptide directing secretion. Positions 23–44 (EQERDADEEERRDDDEMDVEVE) are excised as a propeptide. The cysteines at positions 57 and 63 are disulfide-linked.

In terms of tissue distribution, expressed by the skin glands.

It localises to the secreted. In terms of biological role, the synthetic peptide has antimicrobial activity against Gram-negative bacterium B.dysenteriae (MIC=35 ug/ml), against Gram-positive bacteria S.aureus ATCC 2592 (MIC=4.7 ug/ml) and B.subtilis ATCC 6633 (MIC=9.38 ug/ml) and against fungus C.albicans (MIC=18.75 ug/ml). Has no activity against Gram-negative bacterium E.coli ATCC 25922 but exhibits low hemolytic activity at concentrations up to 200 ug/ml. The chain is Jingdongin-1 from Amolops jingdongensis (Chinese torrent frog).